The following is a 571-amino-acid chain: Kelch-like protein 28 (571 aa).

One can recognise a BTB domain in the interval 35–102 (CDIILRVGDV…AYTGTVFISQ (68 aa)). 6 Kelch repeats span residues 284–331 (VLCA…VLDQ), 332–386 (KVFV…VLAG), 387–433 (EVFA…VLDG), 435–479 (LYAI…VMLG), 480–526 (FIFV…VIDN), and 528–570 (LYVV…GLTA).

This is Kelch-like protein 28 (Klhl28) from Mus musculus (Mouse).